The chain runs to 216 residues: Co-chaperone protein SBA1 (216 aa).

S2 carries the N-acetylserine modification. A CS domain is found at 5–108 (VINPQVAWAQ…LESEYWPRLT (104 aa)). 2 consecutive repeats follow at residues 141-156 (AQGMDFSQMMGGAGGA) and 160-174 (GGMDFSQMMGGAGGA). The tract at residues 169 to 216 (GGAGGAGSPDMAQLQQLLAQSGGNLDMGDFKENDEEDEEEEIEPEVKA) is disordered. Residues 200-216 (ENDEEDEEEEIEPEVKA) are compositionally biased toward acidic residues.

Belongs to the p23/wos2 family. Interacts with HSP82.

Acts as a co-chaperone. This Saccharomyces cerevisiae (strain ATCC 204508 / S288c) (Baker's yeast) protein is Co-chaperone protein SBA1 (SBA1).